A 163-amino-acid polypeptide reads, in one-letter code: Large ribosomal subunit protein bL17 (163 aa).

Positions 127-163 are disordered; sequence VAKKATRTRRSKKSAEAAAPAAVEAPATEEPKAESAE. The segment covering 129 to 138 has biased composition (basic residues); the sequence is KKATRTRRSK. Residues 142-154 are compositionally biased toward low complexity; sequence EAAAPAAVEAPAT.

The protein belongs to the bacterial ribosomal protein bL17 family. In terms of assembly, part of the 50S ribosomal subunit. Contacts protein L32.

In Bacteroides thetaiotaomicron (strain ATCC 29148 / DSM 2079 / JCM 5827 / CCUG 10774 / NCTC 10582 / VPI-5482 / E50), this protein is Large ribosomal subunit protein bL17.